Reading from the N-terminus, the 318-residue chain is Ficolin-1-B (318 aa).

The N-terminal stretch at 1–19 (MTRWVQTFLLLVAVIRSYA) is a signal peptide. The Collagen-like domain occupies 42–99 (GCPGIPGVPGPQGPSGPAGAKGEKGFPGIPGKMGPTGLKGERGISGPKGQKGDKGDPG). A Fibrinogen C-terminal domain is found at 100 to 318 (IPVVGMAQNC…VSEIKFRPQP (219 aa)). Cysteines 109 and 137 form a disulfide. N-linked (GlcNAc...) asparagine glycosylation is found at Asn205 and Asn222. Asp253 lines the Ca(2+) pocket. Asn254 is a glycosylation site (N-linked (GlcNAc...) asparagine). Residues Asp255 and Ser257 each contribute to the Ca(2+) site. An intrachain disulfide couples Cys261 to Cys274. An a carbohydrate-binding site is contributed by 273–275 (SCH). The N-linked (GlcNAc...) asparagine glycan is linked to Asn287.

This sequence belongs to the ficolin lectin family. Homotrimer. May form higher-order oligomers. In terms of processing, N-glycosylated. In terms of tissue distribution, expressed in peripheral blood leukocytes. Also detected at lower levels in spleen and lung.

The protein resides in the secreted. Functionally, may function in innate immunity through activation of the lectin complement pathway. Binds to GalNAc and GlcNAc carbohydrate moieties. This Xenopus laevis (African clawed frog) protein is Ficolin-1-B.